A 79-amino-acid polypeptide reads, in one-letter code: Short neurotoxin 1/5 (79 aa).

A signal peptide spans 1-21 (MKTLLLTLVMVTIMCLDLGYT). 4 cysteine pairs are disulfide-bonded: cysteine 24–cysteine 41, cysteine 34–cysteine 59, cysteine 63–cysteine 71, and cysteine 72–cysteine 77.

The protein belongs to the three-finger toxin family. Short-chain subfamily. Type III alpha-neurotoxin sub-subfamily. As to expression, expressed by the venom gland.

The protein resides in the secreted. Binds with high affinity to muscle nicotinic acetylcholine receptor (nAChR) and inhibit acetylcholine from binding to the receptor, thereby impairing neuromuscular transmission. Compete with the binding of alpha-bungarotoxin on muscle AChR (from Torpedo) with an IC(50) of 0.31 uM (SNTX1) and 3.1 uM (SNTX5). Is able of exerting muscle paralysis, spasms and increased respiration. The polypeptide is Short neurotoxin 1/5 (Pseudonaja textilis (Eastern brown snake)).